The sequence spans 548 residues: MGKPKKKSDLSRAELMMMTIADVIKQLVEAHEEGKDINLNKVKTKTSAKYGLSAQPRLVDIIAAVPPHYRRALVPKLKAKPIRTASGIAVVAVMCKPHRCPHISFTGNICVYCPGGPDSDFEYSTQSYTGYEPTSMRAIRARYDPYLQTRHRVEQLKQLGHSVDKVEFIVMGGTFMALPEEYRDYFIRNLHDALSGHTSNNVTEAVRYSERSNTKCVGITIETRPDYCLKRHLSDMLGYGCTRLEIGVQSVYEDVARDTNRGHTVRAVCESFHLAKDAGFKVVAHMMPDLPNVGMERDVEQFIEFFENPAFRPDGLKLYPTLVIRGTGLYELWKTGRYKSYSPSALVDLVARILALVPPWTRVYRVQRDIPMPLVSSGVEHGNLRELALARMKDMGTECRDVRTREVGIQEIHHKVRPYQVELIRRDYVANGGWETFLSYEDPEQDILIGLLRLRRCSPQSFRPELKGGVSIVRELHVYGSVVPVSSRDPSKFQHQGFGMMLMEEAERIARDEHGSSKLAVISGVGTRNYYRKMGYELEGPYMVKNLY.

Residues 83–373 enclose the Radical SAM core domain; that stretch reads RTASGIAVVA…YRVQRDIPMP (291 aa). [4Fe-4S] cluster-binding residues include cysteine 100, cysteine 110, and cysteine 113. Residues lysine 165, 475–478, 498–500, and tyrosine 531 contribute to the acetyl-CoA site; these read ELHV and FGM. The N-acetyltransferase domain occupies 397–548; the sequence is TECRDVRTRE…EGPYMVKNLY (152 aa).

It belongs to the ELP3 family. As to quaternary structure, component of the elongator complex. It depends on [4Fe-4S] cluster as a cofactor.

It localises to the cytoplasm. The protein resides in the nucleus. The enzyme catalyses uridine(34) in tRNA + acetyl-CoA + S-adenosyl-L-methionine + H2O = 5-(carboxymethyl)uridine(34) in tRNA + 5'-deoxyadenosine + L-methionine + CoA + 2 H(+). It participates in tRNA modification; 5-methoxycarbonylmethyl-2-thiouridine-tRNA biosynthesis. In terms of biological role, catalytic tRNA acetyltransferase subunit of the elongator complex which is required for multiple tRNA modifications, including mcm5U (5-methoxycarbonylmethyl uridine), mcm5s2U (5-methoxycarbonylmethyl-2-thiouridine), and ncm5U (5-carbamoylmethyl uridine). In the elongator complex, acts as a tRNA uridine(34) acetyltransferase by mediating formation of carboxymethyluridine in the wobble base at position 34 in tRNAs. Involved in neurogenesis. Involved in somite development. The sequence is that of Elongator complex protein 3 from Danio rerio (Zebrafish).